Here is a 100-residue protein sequence, read N- to C-terminus: Acylphosphatase (100 aa).

The region spanning 14 to 100 (RWRFFVEGKV…TGADWFEIRS (87 aa)) is the Acylphosphatase-like domain. Residues Arg29 and Asn47 contribute to the active site.

This sequence belongs to the acylphosphatase family.

The catalysed reaction is an acyl phosphate + H2O = a carboxylate + phosphate + H(+). The chain is Acylphosphatase (acyP) from Synechococcus sp. (strain WH7803).